Consider the following 328-residue polypeptide: MLSLFNIALKTLKNHIEFLKHDKDILTHLGLCCKNYDLIHKCSECGNICPNRQQHGTCININYLLIYAVKCDNYMLAYRLLCWGANEKFAHYFRRPLPNLKPLLPKKELTPKDIKQLAYEHFYSDSELITVFEVFRRCRNINDCLEFFYKKNLEFEIYFARLHVYSKTFYRKSWYWFCIFMAVKHGMKQALKKITKTYIPTFYNKTTLNLVLFLSACFYENVEWMKYFFYKANKKIQQRMLSYGMEWAATHGKVRTFVCCYTLGGTASLKMYQKAYQNERYMIMALCSYLGNIQINNPWDNLNPYMMMQNKEKFLPLKFSEETQYFYI.

It belongs to the asfivirus MGF 300 family.

In Ornithodoros (relapsing fever ticks), this protein is Protein MGF 300-4L.